We begin with the raw amino-acid sequence, 221 residues long: Hypoxanthine-guanine phosphoribosyltransferase (221 aa).

The residue at position 2 (Ser2) is an N-acetylserine. GMP is bound by residues Lys85, Asp110–Thr118, Lys159, and Trp188–Glu194. Asp114 (proton acceptor) is an active-site residue.

Belongs to the purine/pyrimidine phosphoribosyltransferase family. As to quaternary structure, dimer. Requires Mg(2+) as cofactor.

Its subcellular location is the cytoplasm. The protein localises to the nucleus. The enzyme catalyses IMP + diphosphate = hypoxanthine + 5-phospho-alpha-D-ribose 1-diphosphate. It catalyses the reaction GMP + diphosphate = guanine + 5-phospho-alpha-D-ribose 1-diphosphate. It functions in the pathway purine metabolism; IMP biosynthesis via salvage pathway; IMP from hypoxanthine: step 1/1. With respect to regulation, subject to feedback inhibition by GMP. Its function is as follows. Converts guanine to guanosine monophosphate, and hypoxanthine to inosine monophosphate. Transfers the 5-phosphoribosyl group from 5-phosphoribosylpyrophosphate onto the purine. Plays a central role in the generation of purine nucleotides through the purine salvage pathway. This Saccharomyces cerevisiae (strain ATCC 204508 / S288c) (Baker's yeast) protein is Hypoxanthine-guanine phosphoribosyltransferase (HPT1).